Consider the following 251-residue polypeptide: Transmembrane ascorbate-dependent reductase CYB561 (251 aa).

M1 carries the N-acetylmethionine modification. Residues 1-16 (MEGGAAAATPTALPYY) are Cytoplasmic-facing. A helical membrane pass occupies residues 17 to 37 (VAFSQLLGLTLVAMTGAWLGL). In terms of domain architecture, Cytochrome b561 spans 19 to 220 (FSQLLGLTLV…FGGAVLYILT (202 aa)). Over 38–51 (YRGGIAWESDLQFN) the chain is Vesicular. Residues 52–72 (AHPLCMVIGLIFLQGNALLVY) form a helical membrane-spanning segment. Heme b is bound by residues H53, R73, and K80. At 73–85 (RVFRNEAKRTTKV) the chain is on the cytoplasmic side. L-ascorbate contacts are provided by K80 and K84. Residues 86–106 (LHGLLHIFALVIALVGLVAVF) form a helical membrane-spanning segment. Heme b is bound by residues H87, 116–119 (DLYS), and H121. Topologically, residues 107–124 (DYHRKKGYADLYSLHSWC) are vesicular. Residues 125–145 (GILVFVLYFVQWLVGFSFFLF) traverse the membrane as a helical segment. At 146-158 (PGASFSLRSRYRP) the chain is on the cytoplasmic side. Residue R153 coordinates L-ascorbate. The chain crosses the membrane as a helical span at residues 159–179 (QHIFFGATIFLLSVGTALLGL). Residues H160 and E181 each coordinate heme b. The Vesicular portion of the chain corresponds to 180 to 198 (KEALLFNLGGKYSAFEPEG). The helical transmembrane segment at 199-219 (VLANVLGLLLACFGGAVLYIL) threads the bilayer. At 220 to 251 (TRADWKRPSQAEEQALSMDFKTLTEGDSPGSQ) the chain is on the cytoplasmic side. Position 225 (K225) interacts with heme b. Residue S247 is modified to Phosphoserine.

Heme b is required as a cofactor. In terms of tissue distribution, expressed in many tissues, in particular the brain especially in the cortex and hippocampus.

It localises to the cytoplasmic vesicle. The protein localises to the secretory vesicle. It is found in the chromaffin granule membrane. The catalysed reaction is monodehydro-L-ascorbate radical(out) + L-ascorbate(in) = monodehydro-L-ascorbate radical(in) + L-ascorbate(out). Its function is as follows. Transmembrane reductase that uses ascorbate as an electron donor in the cytoplasm and transfers electrons across membranes to reduce monodehydro-L-ascorbate radical in the lumen of secretory vesicles. It is therefore involved the regeneration and homeostasis within secretory vesicles of ascorbate which in turn provides reducing equivalents needed to support the activity of intravesicular enzymes. The polypeptide is Transmembrane ascorbate-dependent reductase CYB561 (Homo sapiens (Human)).